We begin with the raw amino-acid sequence, 158 residues long: Protein Smg homolog (158 aa).

Belongs to the Smg family.

This is Protein Smg homolog from Vibrio cholerae serotype O1 (strain ATCC 39315 / El Tor Inaba N16961).